A 514-amino-acid polypeptide reads, in one-letter code: Probable lysine--tRNA ligase, cytoplasmic (514 aa).

It belongs to the class-II aminoacyl-tRNA synthetase family. In terms of assembly, homodimer.

The protein localises to the cytoplasm. The catalysed reaction is tRNA(Lys) + L-lysine + ATP = L-lysyl-tRNA(Lys) + AMP + diphosphate. This Vairimorpha ceranae (strain BRL01) (Microsporidian parasite) protein is Probable lysine--tRNA ligase, cytoplasmic.